Consider the following 467-residue polypeptide: UDP-glycosyltransferase 71D2 (467 aa).

UDP-alpha-D-glucose-binding positions include serine 283, 339-341 (SPQ), 356-364 (HCGWNSIVE), and 378-381 (YAEQ).

Belongs to the UDP-glycosyltransferase family.

The chain is UDP-glycosyltransferase 71D2 (UGT71D2) from Arabidopsis thaliana (Mouse-ear cress).